The following is a 299-amino-acid chain: Tricarboxylate transport protein (299 aa).

Solcar repeat units follow at residues Val10 to Met97, Thr109 to Leu199, and Leu212 to Met297. 6 consecutive transmembrane segments (helical) span residues Phe16–Ala36, Ile66–Ile86, Ile113–Ile133, Gly174–Tyr193, Gly215–Leu235, and Gly272–Tyr291.

The protein belongs to the mitochondrial carrier (TC 2.A.29) family.

The protein resides in the mitochondrion inner membrane. Its function is as follows. Transport of citrate across inner mitochondrial membrane. This Saccharomyces cerevisiae (strain ATCC 204508 / S288c) (Baker's yeast) protein is Tricarboxylate transport protein (CTP1).